We begin with the raw amino-acid sequence, 395 residues long: Acetate kinase (395 aa).

Position 8 (N8) interacts with Mg(2+). An ATP-binding site is contributed by K15. R89 contacts substrate. The active-site Proton donor/acceptor is D146. ATP is bound by residues 206–210, 281–283, and 329–333; these read HLGNG, DLR, and GIGEN. E382 lines the Mg(2+) pocket.

It belongs to the acetokinase family. As to quaternary structure, homodimer. Requires Mg(2+) as cofactor. It depends on Mn(2+) as a cofactor.

It is found in the cytoplasm. The enzyme catalyses acetate + ATP = acetyl phosphate + ADP. The protein operates within metabolic intermediate biosynthesis; acetyl-CoA biosynthesis; acetyl-CoA from acetate: step 1/2. Functionally, catalyzes the formation of acetyl phosphate from acetate and ATP. Can also catalyze the reverse reaction. This is Acetate kinase from Shouchella clausii (strain KSM-K16) (Alkalihalobacillus clausii).